We begin with the raw amino-acid sequence, 1027 residues long: Exportin-T (1027 aa).

The protein belongs to the exportin family.

The protein localises to the nucleus. Its subcellular location is the cytoplasm. In terms of biological role, tRNA nucleus export receptor which facilitates tRNA translocation across the nuclear pore complex. Involved in pre-tRNA splicing, probably by affecting the interaction of pre-tRNA with splicing endonuclease. This Pyricularia oryzae (strain 70-15 / ATCC MYA-4617 / FGSC 8958) (Rice blast fungus) protein is Exportin-T (LOS1).